The primary structure comprises 159 residues: Large ribosomal subunit protein uL11 (159 aa).

The protein belongs to the universal ribosomal protein uL11 family. In terms of assembly, part of the ribosomal stalk of the 50S ribosomal subunit. Interacts with L10 and the large rRNA to form the base of the stalk. L10 forms an elongated spine to which L12 dimers bind in a sequential fashion forming a multimeric L10(L12)X complex.

Its function is as follows. Forms part of the ribosomal stalk which helps the ribosome interact with GTP-bound translation factors. The polypeptide is Large ribosomal subunit protein uL11 (Methanothrix thermoacetophila (strain DSM 6194 / JCM 14653 / NBRC 101360 / PT) (Methanosaeta thermophila)).